The following is a 357-amino-acid chain: tRNA-specific 2-thiouridylase MnmA (357 aa).

ATP contacts are provided by residues 3–10 (AMSGGVDS) and leucine 29. Cysteine 98 serves as the catalytic Nucleophile. A disulfide bridge connects residues cysteine 98 and cysteine 196. Residue glycine 122 coordinates ATP. The interaction with tRNA stretch occupies residues 146–148 (KDQ). The Cysteine persulfide intermediate role is filled by cysteine 196. The segment at 302–303 (RY) is interaction with tRNA.

This sequence belongs to the MnmA/TRMU family.

The protein resides in the cytoplasm. It carries out the reaction S-sulfanyl-L-cysteinyl-[protein] + uridine(34) in tRNA + AH2 + ATP = 2-thiouridine(34) in tRNA + L-cysteinyl-[protein] + A + AMP + diphosphate + H(+). In terms of biological role, catalyzes the 2-thiolation of uridine at the wobble position (U34) of tRNA, leading to the formation of s(2)U34. This is tRNA-specific 2-thiouridylase MnmA from Moorella thermoacetica (strain ATCC 39073 / JCM 9320).